Here is a 217-residue protein sequence, read N- to C-terminus: ATP phosphoribosyltransferase (217 aa).

It belongs to the ATP phosphoribosyltransferase family. Short subfamily. Heteromultimer composed of HisG and HisZ subunits.

The protein localises to the cytoplasm. The catalysed reaction is 1-(5-phospho-beta-D-ribosyl)-ATP + diphosphate = 5-phospho-alpha-D-ribose 1-diphosphate + ATP. It functions in the pathway amino-acid biosynthesis; L-histidine biosynthesis; L-histidine from 5-phospho-alpha-D-ribose 1-diphosphate: step 1/9. Its function is as follows. Catalyzes the condensation of ATP and 5-phosphoribose 1-diphosphate to form N'-(5'-phosphoribosyl)-ATP (PR-ATP). Has a crucial role in the pathway because the rate of histidine biosynthesis seems to be controlled primarily by regulation of HisG enzymatic activity. The sequence is that of ATP phosphoribosyltransferase (hisG) from Neisseria meningitidis serogroup A / serotype 4A (strain DSM 15465 / Z2491).